We begin with the raw amino-acid sequence, 1173 residues long: Alpha-mannosidase 2 (1173 aa).

The tract at residues 1 to 21 (MPFSSYIGNSRRSSTGGGTGG) is disordered. The Cytoplasmic segment spans residues 1–50 (MPFSSYIGNSRRSSTGGGTGGWGQSLLPTALSKSKLAINRKPRKRTLVVN). A helical; Signal-anchor transmembrane segment spans residues 51–71 (FIFANFFVIALTVSLLFFLLT). Residues 72–1173 (LFHFGVPGPI…AYKLELRPHK (1102 aa)) lie on the Lumenal side of the membrane. N-linked (GlcNAc...) asparagine glycosylation is present at N106. Residues H162 and D164 each coordinate Zn(2+). Residue N262 is glycosylated (N-linked (GlcNAc...) asparagine). D276 is a binding site for Zn(2+). Catalysis depends on D276, which acts as the Nucleophile. N467 carries an N-linked (GlcNAc...) asparagine glycan. H564 contributes to the Zn(2+) binding site. 6 N-linked (GlcNAc...) asparagine glycosylation sites follow: N675, N772, N782, N991, N1098, and N1108.

This sequence belongs to the glycosyl hydrolase 38 family. In terms of assembly, homodimer; disulfide-linked. Interacts with GALT1. Requires Zn(2+) as cofactor. Glycosylated.

The protein localises to the golgi apparatus membrane. It carries out the reaction N(4)-{beta-D-GlcNAc-(1-&gt;2)-alpha-D-Man-(1-&gt;3)-[alpha-D-Man-(1-&gt;3)-[alpha-D-Man-(1-&gt;6)]-alpha-D-Man-(1-&gt;6)]-beta-D-Man-(1-&gt;4)-beta-D-GlcNAc-(1-&gt;4)-beta-D-GlcNAc}-L-asparaginyl-[protein] + 2 H2O = 2 alpha-D-mannopyranose + an N(4)-{beta-D-GlcNAc-(1-&gt;2)-alpha-D-Man-(1-&gt;3)-[alpha-D-Man-(1-&gt;6)]-beta-D-Man-(1-&gt;4)-beta-D-GlcNAc-(1-&gt;4)-beta-D-GlcNAc}-L-asparaginyl-[protein]. It functions in the pathway protein modification; protein glycosylation. With respect to regulation, inhibited by 1 mM Cu(2+) and by the class II alpha-mannosidase inhibitor swainsonine. Its function is as follows. Catalyzes the first committed step in the biosynthesis of complex N-glycans. It controls conversion of high mannose to complex N-glycans; the final hydrolytic step in the N-glycan maturation pathway. Converts GlcNAcMan(5)GlcNAc(2) (Man5Gn) into GlcNAcMan(3)GlcNAc(2) (MGn) by sequential removal of two alpha1,6- and alpha1,3-linked mannose residues from the alpha1,6-mannose branch of the substrate. To a lesser extent, also able to cleave beta1,2-xylosylated Man5Gn-glycopeptide (Man5GnX-GP) and pyridylaminated substrates Man5Gn-PA and Man5GnX-PA, but not active toward Man5-glycopeptide. Required for resistance to salt stress. This is Alpha-mannosidase 2 from Arabidopsis thaliana (Mouse-ear cress).